The sequence spans 187 residues: Large ribosomal subunit protein eL18A (187 aa).

A phosphoserine mark is found at serine 16 and serine 64. A phosphothreonine mark is found at threonine 87, threonine 89, and threonine 134. Residue serine 136 is modified to Phosphoserine. Threonine 138 bears the Phosphothreonine mark.

It belongs to the eukaryotic ribosomal protein eL18 family. As to quaternary structure, component of the large ribosomal subunit (LSU). Mature yeast ribosomes consist of a small (40S) and a large (60S) subunit. The 40S small subunit contains 1 molecule of ribosomal RNA (18S rRNA) and at least 33 different proteins. The large 60S subunit contains 3 rRNA molecules (25S, 5.8S and 5S rRNA) and at least 46 different proteins. eL18 interacts with NAP1.

The protein resides in the cytoplasm. Functionally, component of the ribosome, a large ribonucleoprotein complex responsible for the synthesis of proteins in the cell. The small ribosomal subunit (SSU) binds messenger RNAs (mRNAs) and translates the encoded message by selecting cognate aminoacyl-transfer RNA (tRNA) molecules. The large subunit (LSU) contains the ribosomal catalytic site termed the peptidyl transferase center (PTC), which catalyzes the formation of peptide bonds, thereby polymerizing the amino acids delivered by tRNAs into a polypeptide chain. The nascent polypeptides leave the ribosome through a tunnel in the LSU and interact with protein factors that function in enzymatic processing, targeting, and the membrane insertion of nascent chains at the exit of the ribosomal tunnel. This chain is Large ribosomal subunit protein eL18A (rpl1801), found in Schizosaccharomyces pombe (strain 972 / ATCC 24843) (Fission yeast).